Reading from the N-terminus, the 1066-residue chain is FHIP family protein GI14169 (1066 aa).

A compositionally biased stretch (polar residues) spans 1 to 11 (MSWLRTSPLRQ). Residues 1–35 (MSWLRTSPLRQSLTRSGSSSGNGSSGTATTMRQRP) form a disordered region. Positions 12 to 30 (SLTRSGSSSGNGSSGTATT) are enriched in low complexity. Ser-500 bears the Phosphoserine mark. A disordered region spans residues 651–682 (GIDVTTTTTASASDTDLEHNNNSSSISSGRRD). The span at 655–678 (TTTTTASASDTDLEHNNNSSSISS) shows a compositional bias: low complexity. A Phosphoserine modification is found at Ser-820. Disordered stretches follow at residues 821 to 913 (PLHQ…GNSA) and 935 to 1007 (SGGE…TGNF). Residues 822 to 855 (LHQQLQHQQQHQQLAQTNSHTQQQQQQQQQQAQQ) show a composition bias toward low complexity. Polar residues predominate over residues 856 to 874 (RSTYATLSAATPVQASPTS). Residues 890–913 (SRSITSMFSRRSTSSTPASNGNSA) are compositionally biased toward low complexity. Over residues 947–971 (QDSTRGNTCETSLSTAPRQEPQTNV) the composition is skewed to polar residues. Positions 972-997 (GSSSNSSIGSSTQTLSGTHSSSTLHG) are enriched in low complexity.

Belongs to the FHIP family.

In Drosophila mojavensis (Fruit fly), this protein is FHIP family protein GI14169.